The sequence spans 182 residues: ATP-dependent protease subunit HslV (182 aa).

Threonine 7 is a catalytic residue. Na(+)-binding residues include glycine 162, cysteine 165, and threonine 168.

Belongs to the peptidase T1B family. HslV subfamily. As to quaternary structure, a double ring-shaped homohexamer of HslV is capped on each side by a ring-shaped HslU homohexamer. The assembly of the HslU/HslV complex is dependent on binding of ATP.

It is found in the cytoplasm. The enzyme catalyses ATP-dependent cleavage of peptide bonds with broad specificity.. Its activity is regulated as follows. Allosterically activated by HslU binding. Protease subunit of a proteasome-like degradation complex believed to be a general protein degrading machinery. The protein is ATP-dependent protease subunit HslV of Legionella pneumophila subsp. pneumophila (strain Philadelphia 1 / ATCC 33152 / DSM 7513).